The following is a 237-amino-acid chain: Ribonuclease PH (237 aa).

Residues arginine 86 and 124–126 (GTR) each bind phosphate.

The protein belongs to the RNase PH family. In terms of assembly, homohexameric ring arranged as a trimer of dimers.

The enzyme catalyses tRNA(n+1) + phosphate = tRNA(n) + a ribonucleoside 5'-diphosphate. Its function is as follows. Phosphorolytic 3'-5' exoribonuclease that plays an important role in tRNA 3'-end maturation. Removes nucleotide residues following the 3'-CCA terminus of tRNAs; can also add nucleotides to the ends of RNA molecules by using nucleoside diphosphates as substrates, but this may not be physiologically important. Probably plays a role in initiation of 16S rRNA degradation (leading to ribosome degradation) during starvation. The chain is Ribonuclease PH from Methylorubrum extorquens (strain CM4 / NCIMB 13688) (Methylobacterium extorquens).